Here is a 194-residue protein sequence, read N- to C-terminus: Early growth response protein 1 (194 aa).

3 C2H2-type zinc fingers span residues 1–18 (CDRR…IRIH), 24–46 (FQCR…IRTH), and 52–74 (FACD…TKIH).

The protein belongs to the EGR C2H2-type zinc-finger protein family.

The protein resides in the nucleus. Its subcellular location is the cytoplasm. In terms of biological role, transcriptional regulator. Recognizes and binds to the DNA sequence 5'-GCG(T/G)GGGCG-3'(EGR-site) in the promoter region of target genes. Binds double-stranded target DNA, irrespective of the cytosine methylation status. Regulates the transcription of numerous target genes, and thereby plays an important role in regulating the response to growth factors, DNA damage, and ischemia. Plays a role in the regulation of cell survival, proliferation and cell death. Mediates responses to ischemia and hypoxia; regulates the expression of proteins that are involved in inflammatory processes. Plays a role in regulating the expression of circadian clock genes. This chain is Early growth response protein 1 (EGR1), found in Gallus gallus (Chicken).